Here is an 864-residue protein sequence, read N- to C-terminus: Receptor like protein 24 (864 aa).

An N-terminal signal peptide occupies residues 1-29 (MKTVFKSLLLLHFLLLLLLCFVSPSSFFL). At 30-830 (LKVPVGGLVA…EEKGEVINWK (801 aa)) the chain is on the extracellular side. N-linked (GlcNAc...) asparagine glycans are attached at residues Asn61, Asn73, Asn94, and Asn112. LRR repeat units follow at residues 100–125 (FHQLRYLALNRNNFTSASLPSEFCNL), 127–148 (KLKLLSLFSNGFIDLSHNDLMG), 156–182 (LGKLAVLDLSDNHFSGTLNPNNSLFEL), 183–205 (HSLRYLNLAFNNISSSLPSKFGN), 207–229 (NKLEVLSLSFNGFSGQCFPTISN), 230–253 (LTRITQLYLHNNELTGSFPLVQNL), 254–277 (TKLSFLGLSDNLFSGTIPSYLFTF), 279–303 (SLSTLDLRENDLSGSIEVPNSSTSS), 305–326 (LEIMYLGFNHLEGKILEPISKL), 327–350 (INLKRLDLSFLNTSYPIDLNLLSP), 351–376 (LKSLSYLDFSGNSLSPASLSSSSYIP), 378–398 (SMESIVLSLCGIREFPNILKH), 399–423 (LQNLIHIDITSNQIKGKIPEWLWTL), 425–448 (QLSFVDISNNSFNGFQGSAEVFVN), and 449–472 (LSVRILMLDANNFEGALPTLPLSI). N-linked (GlcNAc...) asparagine glycans are attached at residues Asn176, Asn194, Asn229, and Asn252. Asn298 carries an N-linked (GlcNAc...) asparagine glycan. Asn338 is a glycosylation site (N-linked (GlcNAc...) asparagine). 2 N-linked (GlcNAc...) asparagine glycosylation sites follow: Asn433 and Asn448. The stretch at 473–492 (IGFSAIHNSFTGEIPLSICN) is one LRR 16; degenerate repeat. Asn492 and Asn505 each carry an N-linked (GlcNAc...) asparagine glycan. 10 LRR repeats span residues 493–514 (RTSLTMVDLSYNNFTGPIPQCL), 515–538 (SNFMFVNLRKNDLEGSIPDTFYTD), 539–562 (SSLKSLDVGYNRLTGKLPRSLLNC), 564–585 (SLRFLSVDNNRVKDTFPFWLKA), 586–610 (LPNLRVLTLRSNKFYGPISPPHQGP), 613–637 (FPELRIFEIADNMFTGSLPPSFFVN), 688–712 (LTSYAAIDFSGNRLQGQIPESIGLL), 713–735 (KALIALNLSNNAFTGHIPLSFAN), 736–760 (LMNLESLDMSGNQLSGTIPNGLGSL), and 762–785 (FLVYISVAHNKLKGEIPQGTQITG). The N-linked (GlcNAc...) asparagine glycan is linked to Asn561. N-linked (GlcNAc...) asparagine glycosylation occurs at Asn719. The helical transmembrane segment at 831–851 (AVAIGYAPGLLFGLAIAHLIA) threads the bilayer. Topologically, residues 852–864 (SYKPEWLVKIIGF) are cytoplasmic.

This sequence belongs to the RLP family.

The protein localises to the cell membrane. This Arabidopsis thaliana (Mouse-ear cress) protein is Receptor like protein 24.